Reading from the N-terminus, the 63-residue chain is Large ribosomal subunit protein uL29 (63 aa).

This sequence belongs to the universal ribosomal protein uL29 family.

This is Large ribosomal subunit protein uL29 from Shewanella halifaxensis (strain HAW-EB4).